The following is a 295-amino-acid chain: Pyridoxal 5'-phosphate synthase subunit PdxS (295 aa).

D25 contacts D-ribose 5-phosphate. K82 serves as the catalytic Schiff-base intermediate with D-ribose 5-phosphate. G154 contributes to the D-ribose 5-phosphate binding site. A D-glyceraldehyde 3-phosphate-binding site is contributed by R166. D-ribose 5-phosphate-binding positions include G215 and 236-237; that span reads GS.

It belongs to the PdxS/SNZ family. In terms of assembly, in the presence of PdxT, forms a dodecamer of heterodimers.

It carries out the reaction aldehydo-D-ribose 5-phosphate + D-glyceraldehyde 3-phosphate + L-glutamine = pyridoxal 5'-phosphate + L-glutamate + phosphate + 3 H2O + H(+). It functions in the pathway cofactor biosynthesis; pyridoxal 5'-phosphate biosynthesis. Functionally, catalyzes the formation of pyridoxal 5'-phosphate from ribose 5-phosphate (RBP), glyceraldehyde 3-phosphate (G3P) and ammonia. The ammonia is provided by the PdxT subunit. Can also use ribulose 5-phosphate and dihydroxyacetone phosphate as substrates, resulting from enzyme-catalyzed isomerization of RBP and G3P, respectively. The polypeptide is Pyridoxal 5'-phosphate synthase subunit PdxS (Bacillus cereus (strain 03BB102)).